The sequence spans 406 residues: Argininosuccinate synthase (406 aa).

Position 8-16 (Ala8–Ser16) interacts with ATP. Tyr86 provides a ligand contact to L-citrulline. Gly116 contributes to the ATP binding site. 3 residues coordinate L-aspartate: Thr118, Asn122, and Asp123. An L-citrulline-binding site is contributed by Asn122. 5 residues coordinate L-citrulline: Arg126, Ser174, Ser183, Glu259, and Tyr271.

This sequence belongs to the argininosuccinate synthase family. Type 1 subfamily. Homotetramer.

The protein localises to the cytoplasm. The catalysed reaction is L-citrulline + L-aspartate + ATP = 2-(N(omega)-L-arginino)succinate + AMP + diphosphate + H(+). It participates in amino-acid biosynthesis; L-arginine biosynthesis; L-arginine from L-ornithine and carbamoyl phosphate: step 2/3. The sequence is that of Argininosuccinate synthase from Dehalococcoides mccartyi (strain ATCC BAA-2266 / KCTC 15142 / 195) (Dehalococcoides ethenogenes (strain 195)).